Consider the following 810-residue polypeptide: S-adenosyl-L-methionine-dependent tRNA 4-demethylwyosine synthase (810 aa).

Disordered stretches follow at residues 86-116 (NGGG…KGGC) and 156-176 (RSST…VGKK). The segment covering 104–116 (GCCSSKGGKKGGC) has biased composition (low complexity). Positions 159–172 (TPKVFSKNSSSNSR) are enriched in polar residues. One can recognise a Flavodoxin-like domain in the interval 205 to 360 (IYVLYSSLQG…KIDEWTSLLA (156 aa)). FMN contacts are provided by residues 211–215 (SLQGA) and 304–337 (VLGL…RRIF). A compositionally biased stretch (acidic residues) spans 374–397 (DENADSEEDEEEGNGSDELGDVED). The interval 374 to 407 (DENADSEEDEEEGNGSDELGDVEDIGGKGSNGKF) is disordered. Residues 463-713 (FNIASSRCME…ELQRRGLHYD (251 aa)) form the Radical SAM core domain. Residues Cys-479, Cys-483, and Cys-486 each contribute to the [4Fe-4S] cluster site. Residue Lys-496 forms a Glycyl lysine isopeptide (Lys-Gly) (interchain with G-Cter in ubiquitin) linkage. A disordered region spans residues 782-810 (RVYRKDKKKQNKENQETTTRETPLPPIPA).

This sequence belongs to the TYW1 family. It depends on [4Fe-4S] cluster as a cofactor.

The protein resides in the endoplasmic reticulum. The enzyme catalyses N(1)-methylguanosine(37) in tRNA(Phe) + pyruvate + S-adenosyl-L-methionine = 4-demethylwyosine(37) in tRNA(Phe) + 5'-deoxyadenosine + L-methionine + CO2 + H2O. It participates in tRNA modification; wybutosine-tRNA(Phe) biosynthesis. Functionally, component of the wybutosine biosynthesis pathway. Wybutosine is a hyper modified guanosine with a tricyclic base found at the 3'-position adjacent to the anticodon of eukaryotic phenylalanine tRNA. Catalyzes the condensation of N-methylguanine with 2 carbon atoms from pyruvate to form the tricyclic 4-demethylwyosine, an intermediate in wybutosine biosynthesis. The chain is S-adenosyl-L-methionine-dependent tRNA 4-demethylwyosine synthase (TYW1) from Saccharomyces cerevisiae (strain ATCC 204508 / S288c) (Baker's yeast).